The primary structure comprises 143 residues: MATGKTVKDVSPHEFVKAYAAHLKRSGKIELPLWTDIVKTGKLKELAPYDPDWYYIRAASMARKVYLRGGLGVGAFRRIYGGSKRNGSRPPHFCKSSGGVARHILQQLQTMNIVDLDTKGGRKITSSGQRDLDQVAGRIAAAV.

Belongs to the eukaryotic ribosomal protein eS19 family.

This is Small ribosomal subunit protein eS19x (RPS19C) from Arabidopsis thaliana (Mouse-ear cress).